The following is a 466-amino-acid chain: 3-isopropylmalate dehydratase large subunit (466 aa).

[4Fe-4S] cluster is bound by residues C347, C407, and C410.

This sequence belongs to the aconitase/IPM isomerase family. LeuC type 1 subfamily. In terms of assembly, heterodimer of LeuC and LeuD. Requires [4Fe-4S] cluster as cofactor.

The enzyme catalyses (2R,3S)-3-isopropylmalate = (2S)-2-isopropylmalate. The protein operates within amino-acid biosynthesis; L-leucine biosynthesis; L-leucine from 3-methyl-2-oxobutanoate: step 2/4. In terms of biological role, catalyzes the isomerization between 2-isopropylmalate and 3-isopropylmalate, via the formation of 2-isopropylmaleate. The protein is 3-isopropylmalate dehydratase large subunit of Escherichia coli (strain 55989 / EAEC).